The chain runs to 528 residues: 2-isopropylmalate synthase (528 aa).

The Pyruvate carboxyltransferase domain occupies 12 to 279 (IRIFDTTLRD…DSSINTPRIV (268 aa)). Residues Asp21, His214, His216, and Asn250 each contribute to the Mn(2+) site. Positions 401–528 (RLASMTISDV…TTEAPAPATA (128 aa)) are regulatory domain.

This sequence belongs to the alpha-IPM synthase/homocitrate synthase family. LeuA type 1 subfamily. As to quaternary structure, homodimer. Mn(2+) serves as cofactor.

It localises to the cytoplasm. The catalysed reaction is 3-methyl-2-oxobutanoate + acetyl-CoA + H2O = (2S)-2-isopropylmalate + CoA + H(+). It participates in amino-acid biosynthesis; L-leucine biosynthesis; L-leucine from 3-methyl-2-oxobutanoate: step 1/4. Functionally, catalyzes the condensation of the acetyl group of acetyl-CoA with 3-methyl-2-oxobutanoate (2-ketoisovalerate) to form 3-carboxy-3-hydroxy-4-methylpentanoate (2-isopropylmalate). This chain is 2-isopropylmalate synthase, found in Stenotrophomonas maltophilia (strain R551-3).